The primary structure comprises 126 residues: Phosphoribosyl-AMP cyclohydrolase (126 aa).

Aspartate 76 lines the Mg(2+) pocket. Cysteine 77 is a Zn(2+) binding site. Residues aspartate 78 and aspartate 80 each contribute to the Mg(2+) site. The Zn(2+) site is built by cysteine 94 and cysteine 101.

Belongs to the PRA-CH family. In terms of assembly, homodimer. The cofactor is Mg(2+). Requires Zn(2+) as cofactor.

The protein localises to the cytoplasm. It catalyses the reaction 1-(5-phospho-beta-D-ribosyl)-5'-AMP + H2O = 1-(5-phospho-beta-D-ribosyl)-5-[(5-phospho-beta-D-ribosylamino)methylideneamino]imidazole-4-carboxamide. It functions in the pathway amino-acid biosynthesis; L-histidine biosynthesis; L-histidine from 5-phospho-alpha-D-ribose 1-diphosphate: step 3/9. Catalyzes the hydrolysis of the adenine ring of phosphoribosyl-AMP. This Ruthia magnifica subsp. Calyptogena magnifica protein is Phosphoribosyl-AMP cyclohydrolase.